Consider the following 339-residue polypeptide: HPr kinase/phosphorylase (339 aa).

Catalysis depends on residues H153 and K174. 168 to 175 serves as a coordination point for ATP; the sequence is GKSGLGKS. Residue S175 participates in Mg(2+) binding. The active-site Proton acceptor; for phosphorylation activity. Proton donor; for dephosphorylation activity is D192. The interval 216–225 is important for the catalytic mechanism of both phosphorylation and dephosphorylation; that stretch reads MEIRGLGVVD. A Mg(2+)-binding site is contributed by E217. R258 is a catalytic residue. Residues 279–284 are important for the catalytic mechanism of dephosphorylation; the sequence is PINPGK.

It belongs to the HPrK/P family. As to quaternary structure, homohexamer. Mg(2+) serves as cofactor.

The catalysed reaction is [HPr protein]-L-serine + ATP = [HPr protein]-O-phospho-L-serine + ADP + H(+). It carries out the reaction [HPr protein]-O-phospho-L-serine + phosphate + H(+) = [HPr protein]-L-serine + diphosphate. In terms of biological role, catalyzes the ATP- as well as the pyrophosphate-dependent phosphorylation of a specific serine residue in HPr, a phosphocarrier protein of the phosphoenolpyruvate-dependent sugar phosphotransferase system (PTS). HprK/P also catalyzes the pyrophosphate-producing, inorganic phosphate-dependent dephosphorylation (phosphorolysis) of seryl-phosphorylated HPr (P-Ser-HPr). The chain is HPr kinase/phosphorylase from Chlorobium phaeobacteroides (strain BS1).